Consider the following 231-residue polypeptide: Platelet-activating factor acetylhydrolase IB subunit alpha1 (231 aa).

An N-acetylserine modification is found at S2. S2 bears the Phosphoserine mark. Active-site residues include S47, D192, and H195.

Belongs to the 'GDSL' lipolytic enzyme family. Platelet-activating factor acetylhydrolase IB beta/gamma subunits subfamily. As to quaternary structure, forms a catalytic dimer which is either homodimer (alpha1/alpha1 homodimer) or heterodimer with PAFAH1B2 (alpha1/alpha2 heterodimer). Component of the cytosolic (PAF-AH (I)) heterotetrameric enzyme, which is composed of PAFAH1B1 (beta), PAFAH1B2 (alpha2) and PAFAH1B3 (alpha1) subunits. The catalytic activity of the enzyme resides in the alpha1 (PAFAH1B3) and alpha2 (PAFAH1B2) subunits, whereas the beta subunit (PAFAH1B1) has regulatory activity. Trimer formation is not essential for the catalytic activity. Interacts with VLDLR; this interaction may modulate the Reelin pathway.

Its subcellular location is the cytoplasm. It carries out the reaction a 1-O-alkyl-2-acetyl-sn-glycero-3-phosphocholine + H2O = a 1-O-alkyl-sn-glycero-3-phosphocholine + acetate + H(+). It catalyses the reaction 1-O-hexadecyl-2-acetyl-sn-glycero-3-phosphocholine + H2O = 1-O-hexadecyl-sn-glycero-3-phosphocholine + acetate + H(+). The enzyme catalyses 1-O-hexadecyl-2-acetyl-sn-glycero-3-phosphate + H2O = 1-O-hexadecyl-sn-glycero-3-phosphate + acetate + H(+). With respect to regulation, beta subunit (PAFAH1B1) inhibits the acetylhydrolase activity of the alpha1/alpha1 catalytic homodimer. In terms of biological role, alpha1 catalytic subunit of the cytosolic type I platelet-activating factor (PAF) acetylhydrolase (PAF-AH (I)) heterotetrameric enzyme that catalyzes the hydrolyze of the acetyl group at the sn-2 position of PAF and its analogs and modulates the action of PAF. The activity and substrate specificity of PAF-AH (I) are affected by its subunit composition. Both alpha1/alpha1 homodimer (PAFAH1B3/PAFAH1B3 homodimer) and alpha1/alpha2 heterodimer(PAFAH1B3/PAFAH1B2 heterodimer) hydrolyze 1-O-alkyl-2-acetyl-sn-glycero-3-phosphoric acid (AAGPA) more efficiently than PAF, but they have little hydrolytic activity towards 1-O-alkyl-2-acetyl-sn-glycero-3-phosphorylethanolamine (AAGPE). Plays an important role during the development of brain. The protein is Platelet-activating factor acetylhydrolase IB subunit alpha1 of Pongo abelii (Sumatran orangutan).